A 266-amino-acid polypeptide reads, in one-letter code: MLPYPQIDPVAIALGPLKIHWYGLMYLVGIGGAWWLASRRLARFDASWSKEKLSDLVFWVAMGVILGGRLGYVFFYDFAAYIAEPAKILRVWEGGMSFHGGLIGVMLATWWFGKRNGKSFFELMDFIAPLVPIGLGAGRIGNFINAELWGKATDVPWAMVFPTDPEQLARHPSQLYQFALEGVALFTILWFYSRKPRPTMAVSGMFAACYGVFRFIVEFVRVPDAQLGYLAWGWLTMGQILCLPMILGGIGLIAYAYKRQPVQGAA.

The next 7 membrane-spanning stretches (helical) occupy residues 10 to 30 (VAIA…LVGI), 56 to 76 (LVFW…VFFY), 92 to 112 (WEGG…TWWF), 120 to 140 (FFEL…AGRI), 172 to 192 (PSQL…LWFY), 200 to 220 (MAVS…VEFV), and 234 to 254 (WLTM…GLIA). Arginine 139 contributes to the a 1,2-diacyl-sn-glycero-3-phospho-(1'-sn-glycerol) binding site.

The protein belongs to the Lgt family.

The protein localises to the cell inner membrane. It carries out the reaction L-cysteinyl-[prolipoprotein] + a 1,2-diacyl-sn-glycero-3-phospho-(1'-sn-glycerol) = an S-1,2-diacyl-sn-glyceryl-L-cysteinyl-[prolipoprotein] + sn-glycerol 1-phosphate + H(+). The protein operates within protein modification; lipoprotein biosynthesis (diacylglyceryl transfer). Its function is as follows. Catalyzes the transfer of the diacylglyceryl group from phosphatidylglycerol to the sulfhydryl group of the N-terminal cysteine of a prolipoprotein, the first step in the formation of mature lipoproteins. The protein is Phosphatidylglycerol--prolipoprotein diacylglyceryl transferase of Ectopseudomonas mendocina (strain ymp) (Pseudomonas mendocina).